The following is a 271-amino-acid chain: Ribosomal RNA small subunit methyltransferase A (271 aa).

Residues His11, Leu13, Gly38, Glu58, Asp86, and Asn101 each contribute to the S-adenosyl-L-methionine site.

It belongs to the class I-like SAM-binding methyltransferase superfamily. rRNA adenine N(6)-methyltransferase family. RsmA subfamily.

It localises to the cytoplasm. The catalysed reaction is adenosine(1518)/adenosine(1519) in 16S rRNA + 4 S-adenosyl-L-methionine = N(6)-dimethyladenosine(1518)/N(6)-dimethyladenosine(1519) in 16S rRNA + 4 S-adenosyl-L-homocysteine + 4 H(+). Its function is as follows. Specifically dimethylates two adjacent adenosines (A1518 and A1519) in the loop of a conserved hairpin near the 3'-end of 16S rRNA in the 30S particle. May play a critical role in biogenesis of 30S subunits. In Helicobacter pylori (strain J99 / ATCC 700824) (Campylobacter pylori J99), this protein is Ribosomal RNA small subunit methyltransferase A.